A 558-amino-acid chain; its full sequence is Putative F-box/LRR-repeat protein R542 (558 aa).

The 47-residue stretch at 1 to 47 (MLLNLPYEILLIIFSLIESKKFFKLLSINKEVREFILTMLNQNPKSF) folds into the F-box domain. 10 LRR repeats span residues 73–105 (KSTI…GLSF), 139–176 (CGKI…NLQC), 177–220 (CMRI…KIDG), 251–284 (LDKL…DLSG), 285–317 (CINL…GLSY), 329–361 (CFRI…GFFY), 369–395 (VVGY…TISD), 420–444 (CNNI…DLRY), 445–477 (CNNI…GISY), and 481–508 (SKKI…VFKT).

This is Putative F-box/LRR-repeat protein R542 from Acanthamoeba polyphaga mimivirus (APMV).